Consider the following 594-residue polypeptide: DNA ligase 2 (594 aa).

E250 contributes to the ATP binding site. The N6-AMP-lysine intermediate role is filled by K252. ATP-binding residues include R257, R273, E303, F343, R419, and K425.

Belongs to the ATP-dependent DNA ligase family. It depends on Mg(2+) as a cofactor.

The enzyme catalyses ATP + (deoxyribonucleotide)n-3'-hydroxyl + 5'-phospho-(deoxyribonucleotide)m = (deoxyribonucleotide)n+m + AMP + diphosphate.. Functionally, DNA ligase that seals nicks in double-stranded DNA during DNA replication, DNA recombination and DNA repair. This chain is DNA ligase 2, found in Korarchaeum cryptofilum (strain OPF8).